A 133-amino-acid chain; its full sequence is Small ribosomal subunit protein uS12 (133 aa).

Asp89 carries the post-translational modification 3-methylthioaspartic acid. A disordered region spans residues 103–133 (DTAGVAGRTQRRSKYGAKRPKPGQAAPAKKK). Over residues 111–123 (TQRRSKYGAKRPK) the composition is skewed to basic residues. The span at 124–133 (PGQAAPAKKK) shows a compositional bias: low complexity.

This sequence belongs to the universal ribosomal protein uS12 family. Part of the 30S ribosomal subunit. Contacts proteins S8 and S17. May interact with IF1 in the 30S initiation complex.

With S4 and S5 plays an important role in translational accuracy. Functionally, interacts with and stabilizes bases of the 16S rRNA that are involved in tRNA selection in the A site and with the mRNA backbone. Located at the interface of the 30S and 50S subunits, it traverses the body of the 30S subunit contacting proteins on the other side and probably holding the rRNA structure together. The combined cluster of proteins S8, S12 and S17 appears to hold together the shoulder and platform of the 30S subunit. This chain is Small ribosomal subunit protein uS12, found in Bacteroides thetaiotaomicron (strain ATCC 29148 / DSM 2079 / JCM 5827 / CCUG 10774 / NCTC 10582 / VPI-5482 / E50).